The sequence spans 511 residues: Acetylcholine receptor subunit alpha-type unc-38 (511 aa).

The signal sequence occupies residues 1–16; sequence MRSFWLFLLLLLFCIS. The Extracellular portion of the chain corresponds to 17–261; it reads FIKLTEGNED…QLRRKPLFYT (245 aa). Asn-124 carries an N-linked (GlcNAc...) asparagine glycan. Cys-151 and Cys-165 are joined by a disulfide. Residue Asn-202 is glycosylated (N-linked (GlcNAc...) asparagine). A disulfide bond links Cys-238 and Cys-239. The next 3 membrane-spanning stretches (helical) occupy residues 262–282, 291–311, and 324–344; these read VNLV…FYLP, LCIS…EIIP, and LLFT…SLNL. The Cytoplasmic portion of the chain corresponds to 345–464; that stretch reads HFRTPTTHLM…WKYVAMVLDR (120 aa). Residues 465–485 form a helical membrane-spanning segment; the sequence is LFLLIFSIACFVGTVIILLRA.

The protein belongs to the ligand-gated ion channel (TC 1.A.9) family. Acetylcholine receptor (TC 1.A.9.1) subfamily. As to quaternary structure, component of nicotinic acetylcholine receptor. In muscles, composed of 2 non-alpha subunits lev-1 and unc-29, and 3 alpha subunits unc-38, unc-63 and lev-8. In cholinergic motoneurons, composed of 2 non-alpha subunits acr-2 and acr-3, and 3 alpha subunits unc-38, unc-63 and acr-12.

Its subcellular location is the postsynaptic cell membrane. It localises to the cell membrane. Its function is as follows. Alpha subunit of nicotinic acetylcholine receptor (nAChR). Probably acts in cholinergic motoneurons to regulate presynaptic neurotransmitter release, thereby ensuring normal level of excitation of cholinergic motoneurons during locomotion. Involved in nAChR sensitivity to nicotine. The polypeptide is Acetylcholine receptor subunit alpha-type unc-38 (unc-38) (Caenorhabditis elegans).